A 186-amino-acid chain; its full sequence is Ribosome-recycling factor (186 aa).

Belongs to the RRF family.

The protein localises to the cytoplasm. In terms of biological role, responsible for the release of ribosomes from messenger RNA at the termination of protein biosynthesis. May increase the efficiency of translation by recycling ribosomes from one round of translation to another. This chain is Ribosome-recycling factor, found in Rickettsia massiliae (strain Mtu5).